The chain runs to 354 residues: Alkanal monooxygenase alpha chain (354 aa).

The protein belongs to the bacterial luciferase oxidoreductase family. Heterodimer of an alpha and a beta chain.

The catalysed reaction is a long-chain fatty aldehyde + FMNH2 + O2 = a long-chain fatty acid + hnu + FMN + H2O + 2 H(+). Functionally, light-emitting reaction in luminous bacteria. The protein is Alkanal monooxygenase alpha chain (luxA) of Photobacterium leiognathi.